The chain runs to 332 residues: MNVSKARITAIGSYVPERRLTNDDLEKMVDTNDEWIVKRTGIRERRIAADDEFTSDIGYKAVQDLIARYEKSVDDVDMIIVCTFTPDFKTPSAASLIQAKLGIQNTGAIDLNAACAGFTYGLHMANGLISSGLHRKILVIGAETISKVTDYTDRTTCILFGDGAGAVLVEYDENEPSFVSFNLGSEGERANKLYCTGLAEQMNGEELVNTGNLVQSGREVYKWAVNTVPAGMKAVLEKAAMKRNEIDWFVPHSANLRMIESICDKSGIPLEQTLYSLVQYGNTSSATIPLALDIGVREGKLKHGDNVLLYGFGGGLAHAGLILRWTVPTEKN.

Active-site residues include C115 and H252. The ACP-binding stretch occupies residues 253–257 (SANLR). N282 is a catalytic residue.

The protein belongs to the thiolase-like superfamily. FabH family. In terms of assembly, homodimer.

It is found in the cytoplasm. The catalysed reaction is malonyl-[ACP] + acetyl-CoA + H(+) = 3-oxobutanoyl-[ACP] + CO2 + CoA. Its pathway is lipid metabolism; fatty acid biosynthesis. In terms of biological role, catalyzes the condensation reaction of fatty acid synthesis by the addition to an acyl acceptor of two carbons from malonyl-ACP. Catalyzes the first condensation reaction which initiates fatty acid synthesis and may therefore play a role in governing the total rate of fatty acid production. Possesses both acetoacetyl-ACP synthase and acetyl transacylase activities. Its substrate specificity determines the biosynthesis of branched-chain and/or straight-chain of fatty acids. The protein is Beta-ketoacyl-[acyl-carrier-protein] synthase III 2 of Halalkalibacterium halodurans (strain ATCC BAA-125 / DSM 18197 / FERM 7344 / JCM 9153 / C-125) (Bacillus halodurans).